Here is a 105-residue protein sequence, read N- to C-terminus: Large ribosomal subunit protein P2 (105 aa).

The disordered stretch occupies residues 84–105; that stretch reads AEAKKEEPEEEADDDMGFGLFD.

This sequence belongs to the eukaryotic ribosomal protein P1/P2 family. In terms of assembly, P1 and P2 exist as dimers at the large ribosomal subunit. Post-translationally, phosphorylated.

Functionally, plays an important role in the elongation step of protein synthesis. The protein is Large ribosomal subunit protein P2 (ARP-1) of Leishmania donovani.